A 142-amino-acid chain; its full sequence is Large-conductance mechanosensitive channel (142 aa).

A run of 3 helical transmembrane segments spans residues 19–39 (VGII…ADLV), 41–61 (PFIA…ALDG), and 78–98 (FAFG…FVVF).

It belongs to the MscL family. Homopentamer.

It localises to the cell inner membrane. Its function is as follows. Channel that opens in response to stretch forces in the membrane lipid bilayer. May participate in the regulation of osmotic pressure changes within the cell. In Roseobacter denitrificans (strain ATCC 33942 / OCh 114) (Erythrobacter sp. (strain OCh 114)), this protein is Large-conductance mechanosensitive channel.